A 119-amino-acid polypeptide reads, in one-letter code: Large ribosomal subunit protein bL20 (119 aa).

The protein belongs to the bacterial ribosomal protein bL20 family.

Binds directly to 23S ribosomal RNA and is necessary for the in vitro assembly process of the 50S ribosomal subunit. It is not involved in the protein synthesizing functions of that subunit. In Shewanella sediminis (strain HAW-EB3), this protein is Large ribosomal subunit protein bL20.